Consider the following 504-residue polypeptide: Anaerobic nitric oxide reductase transcription regulator NorR (504 aa).

Asp-57 bears the 4-aspartylphosphate mark. A Sigma-54 factor interaction domain is found at 187-416; the sequence is MIGLSPGMTQ…LEHAIHRAVV (230 aa). Residues 215–222 and 278–287 each bind ATP; these read GETGTGKE and ADNGTLFLDE. The H-T-H motif DNA-binding region spans 479-498; the sequence is WAASARMLETDVANLHRLAK.

It participates in nitrogen metabolism; nitric oxide reduction. Functionally, required for the expression of anaerobic nitric oxide (NO) reductase, acts as a transcriptional activator for at least the norVW operon. Activation also requires sigma-54. The chain is Anaerobic nitric oxide reductase transcription regulator NorR from Escherichia fergusonii (strain ATCC 35469 / DSM 13698 / CCUG 18766 / IAM 14443 / JCM 21226 / LMG 7866 / NBRC 102419 / NCTC 12128 / CDC 0568-73).